The primary structure comprises 251 residues: Imidazole glycerol phosphate synthase subunit HisF (251 aa).

Residues aspartate 11 and aspartate 130 contribute to the active site.

It belongs to the HisA/HisF family. Heterodimer of HisH and HisF.

The protein resides in the cytoplasm. The catalysed reaction is 5-[(5-phospho-1-deoxy-D-ribulos-1-ylimino)methylamino]-1-(5-phospho-beta-D-ribosyl)imidazole-4-carboxamide + L-glutamine = D-erythro-1-(imidazol-4-yl)glycerol 3-phosphate + 5-amino-1-(5-phospho-beta-D-ribosyl)imidazole-4-carboxamide + L-glutamate + H(+). The protein operates within amino-acid biosynthesis; L-histidine biosynthesis; L-histidine from 5-phospho-alpha-D-ribose 1-diphosphate: step 5/9. Functionally, IGPS catalyzes the conversion of PRFAR and glutamine to IGP, AICAR and glutamate. The HisF subunit catalyzes the cyclization activity that produces IGP and AICAR from PRFAR using the ammonia provided by the HisH subunit. This chain is Imidazole glycerol phosphate synthase subunit HisF, found in Chlorobium phaeobacteroides (strain DSM 266 / SMG 266 / 2430).